We begin with the raw amino-acid sequence, 340 residues long: UDP-N-acetylglucosamine--N-acetylmuramyl-(pentapeptide) pyrophosphoryl-undecaprenol N-acetylglucosamine transferase (340 aa).

UDP-N-acetyl-alpha-D-glucosamine is bound by residues 10–12, Asn-110, Ser-171, and Gln-272; that span reads TGG.

Belongs to the glycosyltransferase 28 family. MurG subfamily.

It localises to the cell membrane. The catalysed reaction is di-trans,octa-cis-undecaprenyl diphospho-N-acetyl-alpha-D-muramoyl-L-alanyl-D-glutamyl-meso-2,6-diaminopimeloyl-D-alanyl-D-alanine + UDP-N-acetyl-alpha-D-glucosamine = di-trans,octa-cis-undecaprenyl diphospho-[N-acetyl-alpha-D-glucosaminyl-(1-&gt;4)]-N-acetyl-alpha-D-muramoyl-L-alanyl-D-glutamyl-meso-2,6-diaminopimeloyl-D-alanyl-D-alanine + UDP + H(+). The protein operates within cell wall biogenesis; peptidoglycan biosynthesis. Functionally, cell wall formation. Catalyzes the transfer of a GlcNAc subunit on undecaprenyl-pyrophosphoryl-MurNAc-pentapeptide (lipid intermediate I) to form undecaprenyl-pyrophosphoryl-MurNAc-(pentapeptide)GlcNAc (lipid intermediate II). The sequence is that of UDP-N-acetylglucosamine--N-acetylmuramyl-(pentapeptide) pyrophosphoryl-undecaprenol N-acetylglucosamine transferase from Wolbachia pipientis subsp. Culex pipiens (strain wPip).